The sequence spans 273 residues: NH(3)-dependent NAD(+) synthetase (273 aa).

46-53 contacts ATP; the sequence is GISGGQDS. Asp-52 lines the Mg(2+) pocket. Residue Arg-139 participates in deamido-NAD(+) binding. Residue Thr-159 participates in ATP binding. Glu-164 is a binding site for Mg(2+). Residues Lys-172 and Asp-179 each contribute to the deamido-NAD(+) site. Lys-188 and Thr-210 together coordinate ATP. 259–260 serves as a coordination point for deamido-NAD(+); it reads HK.

The protein belongs to the NAD synthetase family. In terms of assembly, homodimer.

The catalysed reaction is deamido-NAD(+) + NH4(+) + ATP = AMP + diphosphate + NAD(+) + H(+). It participates in cofactor biosynthesis; NAD(+) biosynthesis; NAD(+) from deamido-NAD(+) (ammonia route): step 1/1. Functionally, catalyzes the ATP-dependent amidation of deamido-NAD to form NAD. Uses ammonia as a nitrogen source. This is NH(3)-dependent NAD(+) synthetase from Streptococcus agalactiae serotype Ia (strain ATCC 27591 / A909 / CDC SS700).